We begin with the raw amino-acid sequence, 150 residues long: N-alpha-acetyltransferase 30 (150 aa).

The N-acetyltransferase domain occupies 2–150 (VTIVPYSHQY…DAFRYILYPN (149 aa)).

Belongs to the acetyltransferase family. MAK3 subfamily.

Its subcellular location is the cytoplasm. The protein localises to the nucleus. It catalyses the reaction N-terminal L-methionyl-L-leucyl-[protein] + acetyl-CoA = N-terminal N(alpha)-acetyl-L-methionyl-L-leucyl-[protein] + CoA + H(+). The enzyme catalyses N-terminal L-methionyl-L-isoleucyl-[protein] + acetyl-CoA = N-terminal N(alpha)-acetyl-L-methionyl-L-isoleucyl-[protein] + CoA + H(+). The catalysed reaction is N-terminal L-methionyl-L-phenylalanyl-[protein] + acetyl-CoA = N-terminal N(alpha)-acetyl-L-methionyl-L-phenylalanyl-[protein] + CoA + H(+). It carries out the reaction N-terminal L-methionyl-L-tryptophyl-[protein] + acetyl-CoA = N-terminal N(alpha)-acetyl-L-methionyl-L-tryptophyl-[protein] + CoA + H(+). It catalyses the reaction N-terminal L-methionyl-L-tyrosyl-[protein] + acetyl-CoA = N-terminal N(alpha)-acetyl-L-methionyl-L-tyrosyl-[protein] + CoA + H(+). Catalytic component of the NatC N-terminal acetyltransferase. In Schizosaccharomyces pombe (strain 972 / ATCC 24843) (Fission yeast), this protein is N-alpha-acetyltransferase 30 (naa30).